The primary structure comprises 1231 residues: STE20-like serine/threonine-protein kinase (1231 aa).

At Ser-14 the chain carries Phosphoserine. A Protein kinase domain is found at 34–292 (WETIGELGDG…TSQLLQHPFV (259 aa)). ATP contacts are provided by residues 40-48 (LGDGAFGKV) and Lys-63. Asp-155 acts as the Proton acceptor in catalysis. Position 183 is a phosphothreonine (Thr-183). Position 189 is a phosphoserine (Ser-189). Residues 309 to 351 (AEVTEEVEDGKEEDDDEEIENSLPIPTNKRASSDLSIASSEED) form a disordered region. Positions 312–328 (TEEVEDGKEEDDDEEIE) are enriched in acidic residues. Ser-330, Ser-340, Ser-341, Ser-344, Ser-347, Ser-348, Ser-354, and Ser-372 each carry phosphoserine. Polar residues predominate over residues 337 to 347 (KRASSDLSIAS). The interval 405–478 (PDRATELPES…KQPVLENKLV (74 aa)) is disordered. Basic and acidic residues-rich tracts occupy residues 407-428 (RATE…RLPD) and 446-478 (DHAV…NKLV). Ser-507 carries the post-translational modification Phosphoserine. The span at 516–531 (THEKLRKDDTTQKDVI) shows a compositional bias: basic and acidic residues. Residues 516–757 (THEKLRKDDT…TGSTADNSSI (242 aa)) are disordered. Residues Ser-536 and Ser-554 each carry the phosphoserine modification. Residues 601–613 (TDQKLVENTHEKQ) show a composition bias toward basic and acidic residues. Polar residues predominate over residues 615–624 (PISSETTLDT). 2 positions are modified to phosphoserine: Ser-641 and Ser-661. The span at 641–660 (STEEVEVEGAVSETDEEDVQ) shows a compositional bias: acidic residues. A compositionally biased stretch (low complexity) spans 683–692 (EAPAQVEVQV). A compositionally biased stretch (pro residues) spans 693-706 (PVPPQPSEPPPAPI). Ser-775 carries the phosphoserine modification. Position 810 is a phosphothreonine (Thr-810). Ser-814 carries the post-translational modification Phosphoserine. Residues 822 to 1065 (LRRQELRELR…LKNRQTQERA (244 aa)) are a coiled coil. Positions 871 to 906 (DQEIENLEKQQKQTIERLEQEHTNRLRDEAKRIKGE) constitute a UVR domain. At Thr-1093 the chain carries Phosphothreonine. The stretch at 1105–1179 (SAQEEKRQKN…ELKEWREKLR (75 aa)) forms a coiled coil.

This sequence belongs to the protein kinase superfamily. STE Ser/Thr protein kinase family. STE20 subfamily. Post-translationally, proteolytically cleaved by caspase-3. Autophosphorylated. As to expression, ubiquitously expressed.

It localises to the cytoplasm. The enzyme catalyses L-seryl-[protein] + ATP = O-phospho-L-seryl-[protein] + ADP + H(+). It carries out the reaction L-threonyl-[protein] + ATP = O-phospho-L-threonyl-[protein] + ADP + H(+). Mediates apoptosis and actin stress fiber dissolution. In Cavia porcellus (Guinea pig), this protein is STE20-like serine/threonine-protein kinase (SLK).